The following is a 435-amino-acid chain: Actin-like protein 7A (435 aa).

Disordered regions lie at residues 1 to 20 (MWAPPAAIMGDGPAKKVGNQ) and 29 to 65 (QTASLRDGPAKRAVWVRRRSSEPQEPTESKAAKERPK). Residues 31–51 (ASLRDGPAKRAVWVRRRSSEP) are required for interaction with TES. Positions 47–65 (RSSEPQEPTESKAAKERPK) are enriched in basic and acidic residues.

Belongs to the actin family. Interacts (via N-terminus) with TES (via LIM domain 2). Heterodimer with TES; the heterodimer interacts with ENAH to form a heterotrimer. Interacts with ACTL9. Interacts with CYLC1; the interaction may be relevant for proper acrosome attachment to the nuclear envelope.

The protein resides in the cytoplasm. The protein localises to the cytoskeleton. Its subcellular location is the golgi apparatus. It localises to the nucleus. Functionally, essential for normal spermatogenesis and male fertility. Required for normal sperm head morphology, acroplaxome formation, acrosome attachment, and acrosome granule stability. May anchor and stabilize acrosomal adherence to the acroplaxome at least in part by facilitating the presence of F-actin in the subacrosomal space. May play an important role in formation and fusion of Golgi-derived vesicles during acrosome biogenesis. This chain is Actin-like protein 7A (ACTL7A), found in Macaca fascicularis (Crab-eating macaque).